Consider the following 443-residue polypeptide: Cobyrinate a,c-diamide synthase (443 aa).

The GATase cobBQ-type domain maps to lysine 244–arginine 435. The Nucleophile role is filled by cysteine 327.

It belongs to the CobB/CbiA family. It depends on Mg(2+) as a cofactor.

It carries out the reaction cob(II)yrinate + 2 L-glutamine + 2 ATP + 2 H2O = cob(II)yrinate a,c diamide + 2 L-glutamate + 2 ADP + 2 phosphate + 2 H(+). Its pathway is cofactor biosynthesis; adenosylcobalamin biosynthesis; cob(II)yrinate a,c-diamide from sirohydrochlorin (anaerobic route): step 10/10. Its function is as follows. Catalyzes the ATP-dependent amidation of the two carboxylate groups at positions a and c of cobyrinate, using either L-glutamine or ammonia as the nitrogen source. The protein is Cobyrinate a,c-diamide synthase of Thermoplasma acidophilum (strain ATCC 25905 / DSM 1728 / JCM 9062 / NBRC 15155 / AMRC-C165).